The following is a 511-amino-acid chain: Glucans biosynthesis protein G (511 aa).

Residues 1–22 (MMKMRWLSAAVMLTLYTSSSWA) form the signal peptide.

It belongs to the OpgD/OpgG family.

The protein localises to the periplasm. It participates in glycan metabolism; osmoregulated periplasmic glucan (OPG) biosynthesis. Its function is as follows. Involved in the biosynthesis of osmoregulated periplasmic glucans (OPGs). This chain is Glucans biosynthesis protein G, found in Escherichia fergusonii (strain ATCC 35469 / DSM 13698 / CCUG 18766 / IAM 14443 / JCM 21226 / LMG 7866 / NBRC 102419 / NCTC 12128 / CDC 0568-73).